The primary structure comprises 93 residues: ATP synthase subunit c (93 aa).

2 helical membrane passes run 13–33 and 58–78; these read AIGVGIAIGVAACGGGIGMGI and ISLAMIEAQVIYALVIVFILL.

Belongs to the ATPase C chain family. As to quaternary structure, F-type ATPases have 2 components, F(1) - the catalytic core - and F(0) - the membrane proton channel. F(1) has five subunits: alpha(3), beta(3), gamma(1), delta(1), epsilon(1). F(0) has three main subunits: a(1), b(2) and c(10-14). The alpha and beta chains form an alternating ring which encloses part of the gamma chain. F(1) is attached to F(0) by a central stalk formed by the gamma and epsilon chains, while a peripheral stalk is formed by the delta and b chains.

The protein resides in the cell inner membrane. Functionally, f(1)F(0) ATP synthase produces ATP from ADP in the presence of a proton or sodium gradient. F-type ATPases consist of two structural domains, F(1) containing the extramembraneous catalytic core and F(0) containing the membrane proton channel, linked together by a central stalk and a peripheral stalk. During catalysis, ATP synthesis in the catalytic domain of F(1) is coupled via a rotary mechanism of the central stalk subunits to proton translocation. In terms of biological role, key component of the F(0) channel; it plays a direct role in translocation across the membrane. A homomeric c-ring of between 10-14 subunits forms the central stalk rotor element with the F(1) delta and epsilon subunits. The protein is ATP synthase subunit c of Campylobacter hominis (strain ATCC BAA-381 / DSM 21671 / CCUG 45161 / LMG 19568 / NCTC 13146 / CH001A).